A 67-amino-acid polypeptide reads, in one-letter code: Toxin Bl-1 (67 aa).

Residues 2–66 (RDGYISQPEN…GIIVDGIKCH (65 aa)) form the LCN-type CS-alpha/beta domain. 4 cysteine pairs are disulfide-bonded: cysteine 12–cysteine 65, cysteine 16–cysteine 37, cysteine 23–cysteine 47, and cysteine 27–cysteine 49. Threonine 67 is subject to Threonine amide.

This sequence belongs to the long (4 C-C) scorpion toxin superfamily. Sodium channel inhibitor family. Alpha subfamily. As to expression, expressed by the venom gland.

Its subcellular location is the secreted. Alpha toxins bind voltage-independently at site-3 of sodium channels (Nav) and inhibit the inactivation of the activated channels, thereby blocking neuronal transmission. Is highly toxic to insects (tested on the crickets A.domesticus). This peptide may also be toxic to mammals, since it is similar to alpha-like toxins that are active on both insect and mammalian sodium channels. The chain is Toxin Bl-1 from Buthacus leptochelys (Egyptian fat-tailed scorpion).